The following is a 304-amino-acid chain: ATP phosphoribosyltransferase (304 aa).

Belongs to the ATP phosphoribosyltransferase family. Long subfamily. The cofactor is Mg(2+).

Its subcellular location is the cytoplasm. The enzyme catalyses 1-(5-phospho-beta-D-ribosyl)-ATP + diphosphate = 5-phospho-alpha-D-ribose 1-diphosphate + ATP. It functions in the pathway amino-acid biosynthesis; L-histidine biosynthesis; L-histidine from 5-phospho-alpha-D-ribose 1-diphosphate: step 1/9. Feedback inhibited by histidine. Functionally, catalyzes the condensation of ATP and 5-phosphoribose 1-diphosphate to form N'-(5'-phosphoribosyl)-ATP (PR-ATP). Has a crucial role in the pathway because the rate of histidine biosynthesis seems to be controlled primarily by regulation of HisG enzymatic activity. In Xylella fastidiosa (strain 9a5c), this protein is ATP phosphoribosyltransferase.